The following is a 393-amino-acid chain: Polygalacturonase (393 aa).

A signal peptide spans 1–23; that stretch reads MANRRSLFSLSLIFVFMINSAIA. 6 PbH1 repeats span residues 115-136, 178-204, 205-226, 228-248, 258-279, and 288-309; these read VNGVTISGGILDGQGTALWACK, FQNVQMQGVRVSRSGNSPNTDGIHVQM, SSGVTILNSKIATGDDCVSIGP, TSNLWIEGVACGPGHGISIGS, VQNVTVKTVTFSGTQNGLRIKS, and ARNILFQHATMVNVENPIVIDQ. Aspartate 219 (proton donor) is an active-site residue. Cysteine 221 and cysteine 238 form a disulfide bridge. Histidine 242 is an active-site residue. Asparagine 260 carries an N-linked (GlcNAc...) asparagine glycan. Cystine bridges form between cysteine 349-cysteine 355 and cysteine 376-cysteine 392.

This sequence belongs to the glycosyl hydrolase 28 family.

It localises to the secreted. It is found in the cell wall. It catalyses the reaction (1,4-alpha-D-galacturonosyl)n+m + H2O = (1,4-alpha-D-galacturonosyl)n + (1,4-alpha-D-galacturonosyl)m.. In terms of biological role, acts in concert with the pectinesterase, in the ripening process. Is involved in cell wall metabolism, specifically in polyuronide degradation. This is Polygalacturonase from Prunus persica (Peach).